The following is a 332-amino-acid chain: Fructose-1,6-bisphosphatase class 1 (332 aa).

The Mg(2+) site is built by glutamate 89, aspartate 110, leucine 112, and aspartate 113. Residues 113–116 (DGSS), asparagine 206, tyrosine 239, 257–259 (YLY), and lysine 269 each bind substrate. Glutamate 275 is a Mg(2+) binding site.

The protein belongs to the FBPase class 1 family. Homotetramer. The cofactor is Mg(2+).

The protein localises to the cytoplasm. It catalyses the reaction beta-D-fructose 1,6-bisphosphate + H2O = beta-D-fructose 6-phosphate + phosphate. It functions in the pathway carbohydrate biosynthesis; gluconeogenesis. The sequence is that of Fructose-1,6-bisphosphatase class 1 from Citrobacter koseri (strain ATCC BAA-895 / CDC 4225-83 / SGSC4696).